A 1887-amino-acid chain; its full sequence is Bifunctional serine/threonine-protein kinase/NEDD4-like E3 ubiquitin-protein ligase (1887 aa).

Disordered regions lie at residues T19–F55 and T72–N98. Composition is skewed to low complexity over residues N26–N54 and T72–E97. RCC1 repeat units follow at residues Q206–I260, G262–N314, K356–N409, G411–D470, N472–I528, and D529–K581. Residues N299 to S333 are disordered. 3 disordered regions span residues L594–N619, V823–T858, and D1030–N1088. The segment covering V825 to T839 has biased composition (basic and acidic residues). Residues E840 to S852 are compositionally biased toward acidic residues. A compositionally biased stretch (low complexity) spans E1036–N1088. Residues Y1158 to F1437 enclose the Protein kinase domain. ATP-binding positions include L1164–Y1172 and K1184. D1281 functions as the Proton acceptor in the catalytic mechanism. The region spanning E1501–I1887 is the HECT domain. Residues N1586–E1628 are disordered. The active-site Glycyl thioester intermediate is C1855.

It in the N-terminal section; belongs to the protein kinase superfamily. Ser/Thr protein kinase family. This sequence in the C-terminal section; belongs to the protein kinase superfamily. CAMK Ser/Thr protein kinase family.

The enzyme catalyses L-seryl-[protein] + ATP = O-phospho-L-seryl-[protein] + ADP + H(+). The catalysed reaction is L-threonyl-[protein] + ATP = O-phospho-L-threonyl-[protein] + ADP + H(+). It carries out the reaction S-ubiquitinyl-[E2 ubiquitin-conjugating enzyme]-L-cysteine + [acceptor protein]-L-lysine = [E2 ubiquitin-conjugating enzyme]-L-cysteine + N(6)-ubiquitinyl-[acceptor protein]-L-lysine.. Its pathway is protein modification; protein ubiquitination. This is Bifunctional serine/threonine-protein kinase/NEDD4-like E3 ubiquitin-protein ligase from Dictyostelium discoideum (Social amoeba).